Reading from the N-terminus, the 75-residue chain is Large ribosomal subunit protein bL31 (75 aa).

Zn(2+) contacts are provided by C16, C18, C37, and C40.

This sequence belongs to the bacterial ribosomal protein bL31 family. Type A subfamily. In terms of assembly, part of the 50S ribosomal subunit. Requires Zn(2+) as cofactor.

Its function is as follows. Binds the 23S rRNA. The polypeptide is Large ribosomal subunit protein bL31 (Baumannia cicadellinicola subsp. Homalodisca coagulata).